A 600-amino-acid chain; its full sequence is Mediator of RNA polymerase II transcription subunit 26 (600 aa).

A TFIIS N-terminal domain is found at 10–87 (QIRDRLLQAI…RSWQKLIEPA (78 aa)). 3 disordered regions span residues 99–330 (GATG…RRLE), 348–402 (HQRL…PRDY), and 431–461 (TRQI…ELDK). Positions 123–133 (SIHDLKSRNDL) are enriched in basic and acidic residues. Polar residues predominate over residues 175-197 (PNSSPLPTNGISGSPESFASSLD). Residues 207–218 (SRLERDENDKHS) are compositionally biased toward basic and acidic residues. Positions 314-324 (SPLPLAQPSTP) are enriched in pro residues. The segment covering 441 to 461 (EPVRADSPVHMEQQSRTELDK) has biased composition (basic and acidic residues). A phosphoserine mark is found at S447, S470, and S535.

It belongs to the Mediator complex subunit 26 family. In terms of assembly, component of the Mediator complex, which is composed of MED1, MED4, MED6, MED7, MED8, MED9, MED10, MED11, MED12, MED13, MED13L, MED14, MED15, MED16, MED17, MED18, MED19, MED20, MED21, MED22, MED23, MED24, MED25, MED26, MED27, MED29, MED30, MED31, CCNC, CDK8 and CDC2L6/CDK11. The MED12, MED13, CCNC and CDK8 subunits form a distinct module termed the CDK8 module. Mediator containing the CDK8 module is less active than Mediator lacking this module in supporting transcriptional activation. Individual preparations of the Mediator complex lacking one or more distinct subunits have been variously termed ARC, CRSP, DRIP, PC2, SMCC and TRAP. Interacts with CEBPB (when not methylated).

Its subcellular location is the nucleus. Its function is as follows. Component of the Mediator complex, a coactivator involved in the regulated transcription of nearly all RNA polymerase II-dependent genes. Mediator functions as a bridge to convey information from gene-specific regulatory proteins to the basal RNA polymerase II transcription machinery. Mediator is recruited to promoters by direct interactions with regulatory proteins and serves as a scaffold for the assembly of a functional pre-initiation complex with RNA polymerase II and the general transcription factors. The sequence is that of Mediator of RNA polymerase II transcription subunit 26 (MED26) from Homo sapiens (Human).